A 272-amino-acid chain; its full sequence is Ribosomal RNA small subunit methyltransferase A (272 aa).

Residues N18, L20, G45, E66, D91, and N113 each coordinate S-adenosyl-L-methionine.

It belongs to the class I-like SAM-binding methyltransferase superfamily. rRNA adenine N(6)-methyltransferase family. RsmA subfamily.

The protein resides in the cytoplasm. The catalysed reaction is adenosine(1518)/adenosine(1519) in 16S rRNA + 4 S-adenosyl-L-methionine = N(6)-dimethyladenosine(1518)/N(6)-dimethyladenosine(1519) in 16S rRNA + 4 S-adenosyl-L-homocysteine + 4 H(+). Its function is as follows. Specifically dimethylates two adjacent adenosines (A1518 and A1519) in the loop of a conserved hairpin near the 3'-end of 16S rRNA in the 30S particle. May play a critical role in biogenesis of 30S subunits. The protein is Ribosomal RNA small subunit methyltransferase A of Yersinia enterocolitica serotype O:8 / biotype 1B (strain NCTC 13174 / 8081).